The chain runs to 184 residues: Orotate phosphoribosyltransferase (184 aa).

5-phospho-alpha-D-ribose 1-diphosphate is bound by residues arginine 99, lysine 100, lysine 103, histidine 105, and glutamate 125–serine 133. Orotate is bound by residues threonine 129 and arginine 157.

Belongs to the purine/pyrimidine phosphoribosyltransferase family. PyrE subfamily. In terms of assembly, homodimer. Requires Mg(2+) as cofactor.

It catalyses the reaction orotidine 5'-phosphate + diphosphate = orotate + 5-phospho-alpha-D-ribose 1-diphosphate. Its pathway is pyrimidine metabolism; UMP biosynthesis via de novo pathway; UMP from orotate: step 1/2. Functionally, catalyzes the transfer of a ribosyl phosphate group from 5-phosphoribose 1-diphosphate to orotate, leading to the formation of orotidine monophosphate (OMP). This chain is Orotate phosphoribosyltransferase, found in Corynebacterium glutamicum (strain ATCC 13032 / DSM 20300 / JCM 1318 / BCRC 11384 / CCUG 27702 / LMG 3730 / NBRC 12168 / NCIMB 10025 / NRRL B-2784 / 534).